The following is a 225-amino-acid chain: NAD(P)H-quinone oxidoreductase subunit K, chloroplastic (225 aa).

[4Fe-4S] cluster-binding residues include cysteine 43, cysteine 44, cysteine 108, and cysteine 139.

This sequence belongs to the complex I 20 kDa subunit family. In terms of assembly, NDH is composed of at least 16 different subunits, 5 of which are encoded in the nucleus. [4Fe-4S] cluster is required as a cofactor.

Its subcellular location is the plastid. It is found in the chloroplast thylakoid membrane. The enzyme catalyses a plastoquinone + NADH + (n+1) H(+)(in) = a plastoquinol + NAD(+) + n H(+)(out). It carries out the reaction a plastoquinone + NADPH + (n+1) H(+)(in) = a plastoquinol + NADP(+) + n H(+)(out). Its function is as follows. NDH shuttles electrons from NAD(P)H:plastoquinone, via FMN and iron-sulfur (Fe-S) centers, to quinones in the photosynthetic chain and possibly in a chloroplast respiratory chain. The immediate electron acceptor for the enzyme in this species is believed to be plastoquinone. Couples the redox reaction to proton translocation, and thus conserves the redox energy in a proton gradient. The chain is NAD(P)H-quinone oxidoreductase subunit K, chloroplastic from Oryza nivara (Indian wild rice).